The following is a 344-amino-acid chain: Geranylgeranyl transferase type-2 subunit alpha (344 aa).

PFTA repeat units follow at residues 44-78 (YSEG…NDVF), 89-123 (LLDN…NAPY), 125-159 (NWNY…QIER), 165-199 (LAKK…TILN), 214-248 (ILEQ…HCNP), and 266-293 (YLQK…SLVN).

It belongs to the protein prenyltransferase subunit alpha family. Heterodimer of an alpha and a beta subunit.

The enzyme catalyses geranylgeranyl diphosphate + L-cysteinyl-[protein] = S-geranylgeranyl-L-cysteinyl-[protein] + diphosphate. Functionally, catalyzes the transfer of a geranyl-geranyl moiety from geranyl-geranyl pyrophosphate to proteins having the C-terminal-XCC or -XCXC, where both cysteines may become modified. In Schizosaccharomyces pombe (strain 972 / ATCC 24843) (Fission yeast), this protein is Geranylgeranyl transferase type-2 subunit alpha (bet4).